A 347-amino-acid chain; its full sequence is UDP-rhamnose/UDP-galactose transporter 1 (347 aa).

The next 10 helical transmembrane spans lie at 11–31 (AVSDVGAWAMNVISSVGIIMA), 43–63 (FGFATTLTGFHFAFTALVGMV), 80–100 (LLWFSIVANISIAAMNFSLML), 103–123 (VGFYQISKLSMIPVVCVLEWI), 132–152 (EVKASVMVVVIGVGICTVTDV), 159–179 (FICACTAVFSTSLQQISIGSL), 195–215 (APIQAISLLICGPFVDYLLSG), 223–243 (MTYGAIFCILLSCALAVFCNI), 256–276 (SFQVLGHMKTVCVLTLGWLLF), and 285–305 (IAGMAIAIVGMVIYSWAVDIE).

Belongs to the TPT transporter family. TPT (TC 2.A.7.9) subfamily. In terms of tissue distribution, widely expressed in the whole plant.

The protein localises to the golgi apparatus membrane. Functionally, nucleotide-sugar transporter that transports UDP-rhamnose or UDP-galactose and UMP in a strict counter-exchange mode. This chain is UDP-rhamnose/UDP-galactose transporter 1, found in Arabidopsis thaliana (Mouse-ear cress).